A 442-amino-acid polypeptide reads, in one-letter code: D-serine dehydratase (442 aa).

Residue Lys-118 is modified to N6-(pyridoxal phosphate)lysine.

Belongs to the serine/threonine dehydratase family. DsdA subfamily. As to quaternary structure, monomer. Requires pyridoxal 5'-phosphate as cofactor.

The catalysed reaction is D-serine = pyruvate + NH4(+). This is D-serine dehydratase from Escherichia fergusonii (strain ATCC 35469 / DSM 13698 / CCUG 18766 / IAM 14443 / JCM 21226 / LMG 7866 / NBRC 102419 / NCTC 12128 / CDC 0568-73).